Here is a 110-residue protein sequence, read N- to C-terminus: UPF0122 protein SERP0802 (110 aa).

The protein belongs to the UPF0122 family.

In terms of biological role, might take part in the signal recognition particle (SRP) pathway. This is inferred from the conservation of its genetic proximity to ftsY/ffh. May be a regulatory protein. The polypeptide is UPF0122 protein SERP0802 (Staphylococcus epidermidis (strain ATCC 35984 / DSM 28319 / BCRC 17069 / CCUG 31568 / BM 3577 / RP62A)).